The following is a 189-amino-acid chain: ATP synthase subunit b (189 aa).

The helical transmembrane segment at 38-58 (PMFLATLIAFILVVLILWFLL) threads the bilayer.

The protein belongs to the ATPase B chain family. In terms of assembly, F-type ATPases have 2 components, F(1) - the catalytic core - and F(0) - the membrane proton channel. F(1) has five subunits: alpha(3), beta(3), gamma(1), delta(1), epsilon(1). F(0) has three main subunits: a(1), b(2) and c(10-14). The alpha and beta chains form an alternating ring which encloses part of the gamma chain. F(1) is attached to F(0) by a central stalk formed by the gamma and epsilon chains, while a peripheral stalk is formed by the delta and b chains.

The protein resides in the cell membrane. In terms of biological role, f(1)F(0) ATP synthase produces ATP from ADP in the presence of a proton or sodium gradient. F-type ATPases consist of two structural domains, F(1) containing the extramembraneous catalytic core and F(0) containing the membrane proton channel, linked together by a central stalk and a peripheral stalk. During catalysis, ATP synthesis in the catalytic domain of F(1) is coupled via a rotary mechanism of the central stalk subunits to proton translocation. Component of the F(0) channel, it forms part of the peripheral stalk, linking F(1) to F(0). This Mycoplasmopsis agalactiae (strain NCTC 10123 / CIP 59.7 / PG2) (Mycoplasma agalactiae) protein is ATP synthase subunit b.